The chain runs to 107 residues: Nucleoid-associated protein Mlg_1509 (107 aa).

It belongs to the YbaB/EbfC family. As to quaternary structure, homodimer.

It is found in the cytoplasm. The protein resides in the nucleoid. Functionally, binds to DNA and alters its conformation. May be involved in regulation of gene expression, nucleoid organization and DNA protection. This chain is Nucleoid-associated protein Mlg_1509, found in Alkalilimnicola ehrlichii (strain ATCC BAA-1101 / DSM 17681 / MLHE-1).